We begin with the raw amino-acid sequence, 6269 residues long: Nonribosomal peptide synthetase 1 (6269 aa).

The adenylation 1 stretch occupies residues 249-781; it reads ENDWSRVCSF…VSGKLDRKSI (533 aa). Residues 803–879 enclose the Carrier 1 domain; that stretch reads RAANSTEDQL…ELATRVKGVT (77 aa). At S840 the chain carries O-(pantetheine 4'-phosphoryl)serine. The interval 894–1342 is epimerase 1; it reads LSPIQKLHFM…TLSDFPMLSL (449 aa). Residues 1373–1775 are condensation 1; that stretch reads SRMQQGILLS…FLQSLENIIH (403 aa). The interval 1725 to 2333 is adenylation 2; it reads HDPAEFPVYV…TGLLDRWFLR (609 aa). Residues 2364–2386 form a disordered region; the sequence is KPSPSQLLPSSTSATHRSSGTST. Residues 2367 to 2376 are compositionally biased toward low complexity; that stretch reads PSQLLPSSTS. Positions 2377 to 2386 are enriched in polar residues; the sequence is ATHRSSGTST. A condensation 2 region spans residues 2597 to 2670; the sequence is WRKYLADVES…TGSEEVCYGY (74 aa). The adenylation 3 stretch occupies residues 2845 to 3368; sequence RCAHEIIEQQ…SGKLDRKKLR (524 aa). The region spanning 3392-3468 is the Carrier 2 domain; it reads ASDEGVEGTL…NMAKRCGMLQ (77 aa). At S3429 the chain carries O-(pantetheine 4'-phosphoryl)serine. Positions 3512–3898 are condensation 3; the sequence is CSPVQEGLLT…GQFSFVLEQL (387 aa). The segment at 3919-4454 is adenylation 4; it reads DSKEVALWNK…VSGKLDRKKI (536 aa). The Carrier 3 domain maps to 4487 to 4563; the sequence is EDKSTAAKIL…ELIQAAEVET (77 aa). S4524 bears the O-(pantetheine 4'-phosphoryl)serine mark. The epimerase 2 stretch occupies residues 4578–5024; that stretch reads LSPIQNLYFK…DFPLLPITYD (447 aa). The interval 5052-5466 is condensation 4; sequence SSVQEGILLS…PSQLVSELDL (415 aa). The region spanning 5552 to 5628 is the Carrier 4 domain; sequence SKLMEPEKRL…DMLAAISASN (77 aa). An O-(pantetheine 4'-phosphoryl)serine modification is found at S5589. A disordered region spans residues 5628–5658; that stretch reads NSSSALEPDSPADSNNEKPAEPPRLVELERN. Positions 5642 to 5657 are enriched in basic and acidic residues; sequence NNEKPAEPPRLVELER. Positions 5720–6067 are condensation 5; it reads FFFDGRGSLD…SSSDGKLGVS (348 aa). In terms of domain architecture, Carrier 5 spans 6139 to 6220; the sequence is SDILVHSDVV…GQMAVLTLHN (82 aa).

It belongs to the NRP synthetase family. In terms of processing, the thiolation domains are 4'-phosphopantetheinylated.

Functionally, nonribosomal peptide synthesis (NRPS) is a key mechanism responsible for the biosynthesis of bioactive metabolites which are potentially contributing to organismal virulence. Contributes to improved fungal tolerance against oxidative stress, during the infection process. This is Nonribosomal peptide synthetase 1 (NRPS1) from Aspergillus fumigatus (strain ATCC MYA-4609 / CBS 101355 / FGSC A1100 / Af293) (Neosartorya fumigata).